Here is a 170-residue protein sequence, read N- to C-terminus: Protein GrpE (170 aa).

The tract at residues 1–29 (MSEEIKNEEIVEEVEATEEVVETPEKSEL) is disordered. Residues 10–22 (IVEEVEATEEVVE) show a composition bias toward acidic residues.

It belongs to the GrpE family. Homodimer.

The protein resides in the cytoplasm. Participates actively in the response to hyperosmotic and heat shock by preventing the aggregation of stress-denatured proteins, in association with DnaK and GrpE. It is the nucleotide exchange factor for DnaK and may function as a thermosensor. Unfolded proteins bind initially to DnaJ; upon interaction with the DnaJ-bound protein, DnaK hydrolyzes its bound ATP, resulting in the formation of a stable complex. GrpE releases ADP from DnaK; ATP binding to DnaK triggers the release of the substrate protein, thus completing the reaction cycle. Several rounds of ATP-dependent interactions between DnaJ, DnaK and GrpE are required for fully efficient folding. In Streptococcus suis (strain 98HAH33), this protein is Protein GrpE.